The primary structure comprises 583 residues: Arginine--tRNA ligase (583 aa).

The short motif at 131–141 (ANPTGPMHVGH) is the 'HIGH' region element.

This sequence belongs to the class-I aminoacyl-tRNA synthetase family. In terms of assembly, monomer.

The protein localises to the cytoplasm. It carries out the reaction tRNA(Arg) + L-arginine + ATP = L-arginyl-tRNA(Arg) + AMP + diphosphate. This Parvibaculum lavamentivorans (strain DS-1 / DSM 13023 / NCIMB 13966) protein is Arginine--tRNA ligase.